The sequence spans 349 residues: Histone-lysine N-methyltransferase ATXR6 (349 aa).

The interval 1–28 (MVAVRRRRTQASNPRSEPPQHMSDHDSD) is disordered. Residues 32 to 82 (DTVCEECSSGKQPAKLLLCDKCDKGFHLFCLRPILVSVPKGSWFCPSCSKH) form a PHD-type zinc finger. The PIP motif signature appears at 92–99 (QTKIIDFF). Residues 105–126 (PDSSQISSSSDSIGKKRKKTSL) are disordered. Residues 106–116 (DSSQISSSSDS) are compositionally biased toward low complexity. Residue M190 coordinates substrate. The 124-residue stretch at 214 to 337 (PPLMVVFDPY…KGERLYYDYN (124 aa)) folds into the SET domain. Residues 224–226 (EGF) and 287–291 (RFISG) each bind S-adenosyl-L-methionine. Residues R309 and 339–340 (YE) contribute to the substrate site. S-adenosyl-L-methionine is bound by residues Y343 and V349.

It belongs to the class V-like SAM-binding methyltransferase superfamily. Histone-lysine methyltransferase family. TRX/MLL subfamily. Interacts with PCNA1 and PCNA2. Interacts (via PHD domain) with HTR1 (via N-terminus). Interacts with IPS1. In terms of tissue distribution, expressed in leaves, roots, stems, flowers and siliques. Up-regulated in tissues where cell division is active.

Its subcellular location is the nucleus. The catalysed reaction is L-lysyl(27)-[histone H3] + S-adenosyl-L-methionine = N(6)-methyl-L-lysyl(27)-[histone H3] + S-adenosyl-L-homocysteine + H(+). Functionally, histone methyltransferase that specifically monomethylates 'Lys-27' of histone H3 (H3K27me1). Has higher activity on nucleosomes containing H3.1 than H3.3. Involved in the formation of constitutive heterochromatin and the silencing of heterochromatic elements. May act as a positive regulator of the G1-S transition. Influences which sets of rRNA gene variants are expressed or silenced. Up-regulated by E2FB. The chain is Histone-lysine N-methyltransferase ATXR6 (ATXR6) from Arabidopsis thaliana (Mouse-ear cress).